Here is a 1391-residue protein sequence, read N- to C-terminus: Eukaryotic translation initiation factor 3 subunit A (1391 aa).

A PCI domain is found at 315 to 498; that stretch reads MQRMSTRVLL…RTLSFGSDLN (184 aa). 6 stretches are compositionally biased toward basic and acidic residues: residues 809 to 921, 940 to 959, 966 to 1234, 1246 to 1257, 1265 to 1307, and 1313 to 1380; these read DKEE…RGGP, AALR…EKVS, EKGG…RDQT, GWREREKAREDS, QAPE…ETPR, and DSDR…IKPE. The tract at residues 809-1391 is disordered; that stretch reads DKEEEEERLR…DEDGWTTVRR (583 aa). 2 tandem repeats follow at residues 973–982 and 983–992. Positions 973–1229 are 26 X 10 AA approximate tandem repeats of [DE]-[DE]-[DE]-R-[GATV]-[PS]-[KRW]-R-G-[AEFGIL]; it reads DEDRGPKRGL…DDDRGPRRGE (257 aa). Residues 993–1001 form a 3; approximate repeat; it reads DDAGPRRGF. 20 repeat units span residues 1002–1011, 1012–1021, 1022–1031, 1032–1041, 1042–1051, 1052–1061, 1062–1071, 1072–1081, 1082–1091, 1092–1101, 1102–1111, 1112–1120, 1122–1131, 1132–1141, 1142–1151, 1152–1161, 1162–1171, 1172–1181, 1182–1191, and 1192–1201. The stretch at 1202–1209 is one 24; approximate repeat; that stretch reads DDVPRRGA. Repeat copies occupy residues 1210-1219 and 1220-1229.

This sequence belongs to the eIF-3 subunit A family. Component of the eukaryotic translation initiation factor 3 (eIF-3) complex, which is composed of 13 subunits: eif3a, eif3b, eif3c, eif3d, eif3e, eif3f, eif3g, eif3h, eif3i, eif3j, eif3k, eif3l and eif3m.

The protein localises to the cytoplasm. In terms of biological role, RNA-binding component of the eukaryotic translation initiation factor 3 (eIF-3) complex, which is involved in protein synthesis of a specialized repertoire of mRNAs and, together with other initiation factors, stimulates binding of mRNA and methionyl-tRNAi to the 40S ribosome. The eIF-3 complex specifically targets and initiates translation of a subset of mRNAs involved in cell proliferation. In Xenopus tropicalis (Western clawed frog), this protein is Eukaryotic translation initiation factor 3 subunit A (eif3a).